A 311-amino-acid chain; its full sequence is Malate dehydrogenase (311 aa).

NAD(+) contacts are provided by residues 7-13 (GAAGGIG) and Asp34. Arg81 and Arg87 together coordinate substrate. Residues Asn94 and 117 to 119 (ITN) contribute to the NAD(+) site. Residues Asn119 and Arg153 each contribute to the substrate site. The Proton acceptor role is filled by His177. Met227 is an NAD(+) binding site.

This sequence belongs to the LDH/MDH superfamily. MDH type 1 family. In terms of assembly, homodimer.

The catalysed reaction is (S)-malate + NAD(+) = oxaloacetate + NADH + H(+). Its function is as follows. Catalyzes the reversible oxidation of malate to oxaloacetate. The sequence is that of Malate dehydrogenase from Shewanella baltica (strain OS223).